Reading from the N-terminus, the 671-residue chain is Amidase chry2 (671 aa).

The Nucleophile role is filled by Cys-2. The region spanning 2-220 (CGISAFITHP…PGHYLICRPN (219 aa)) is the Glutamine amidotransferase type-2 domain. An Asparagine synthetase domain is found at 251–639 (VRERLLEAVR…TQDAMDGAFN (389 aa)).

It belongs to the asparagine synthetase family.

It functions in the pathway pigment biosynthesis. Functionally, amidase; part of the gene cluster that mediates the biosynthesis of the yellow pigment chrysogine. Pyruvic acid and anthranilic acid are likely substrates for the nonribosomal peptide synthetase chry1/NRPS14, with pyruvic acid adenylated by the first A domain and anthranilic acid by the second. If pyruvic acid and anthranilic acid are merged and released from chry1/NRPS14 by hydrolysis, a subsequent amidation would lead to 2-pyruvoylaminobenzamide. This process is probably catalyzed by the amidotransferase chry2 using glutamine as amino donor. The dehydrogenase chry5 that has a terminal berberine bridge domain for C-N cyclization could catalyze the cyclization of 2-pyruvoylaminobenzamide to yield acetyl-4(3H)-quinazolidinone. A final reduction of acetyl-4(3H)-quinazolidinone catalyzed by the oxidoreductase chry4 would result in chrysogine. The protein is Amidase chry2 of Gibberella zeae (strain ATCC MYA-4620 / CBS 123657 / FGSC 9075 / NRRL 31084 / PH-1) (Wheat head blight fungus).